Here is a 274-residue protein sequence, read N- to C-terminus: Large ribosomal subunit protein uL2cz/uL2cy (274 aa).

Disordered stretches follow at residues 1–24 and 223–274; these read MAIHLYKTSTPSTRNGTVDSQVKS and MNPV…RRSK. Over residues 7–24 the composition is skewed to polar residues; the sequence is KTSTPSTRNGTVDSQVKS.

Belongs to the universal ribosomal protein uL2 family. Part of the 50S ribosomal subunit.

The protein localises to the plastid. Its subcellular location is the chloroplast. The chain is Large ribosomal subunit protein uL2cz/uL2cy (rpl2-A) from Nicotiana sylvestris (Wood tobacco).